The sequence spans 120 residues: UPF0344 protein LMHCC_0278 (120 aa).

4 helical membrane passes run 3-23 (GYIH…ALLI), 33-53 (MLQM…IMMV), 62-82 (ILAI…EMLL), and 92-112 (GMFL…GFYL).

Belongs to the UPF0344 family.

Its subcellular location is the cell membrane. In Listeria monocytogenes serotype 4a (strain HCC23), this protein is UPF0344 protein LMHCC_0278.